The primary structure comprises 339 residues: Lipopolysaccharide 1,2-glucosyltransferase (339 aa).

UDP contacts are provided by residues 35-40 (GIDENY) and 132-133 (DA). Positions 132 and 134 each coordinate Mg(2+). Short sequence motifs (DXD) lie at residues 132-134 (DAD) and 219-221 (DQD). H268 provides a ligand contact to Mg(2+). 268 to 274 (HYTGITK) serves as a coordination point for UDP.

This sequence belongs to the glycosyltransferase 8 family. Mg(2+) serves as cofactor.

The protein resides in the cell inner membrane. The enzyme catalyses UDP-glucose + [lipopolysaccharide] = UDP + D-glucosyl-[lipopolysaccharide].. Its pathway is bacterial outer membrane biogenesis; LPS core biosynthesis. Its function is as follows. Glucosyltransferase involved in the biosynthesis of the core oligosaccharide region of lipopolysaccharide (LPS). Catalyzes the addition of a glucose (glucose II) to the outer-core galactose I. Has a marked preference for its specific donor substrate, but it appears to have a relaxed specificity for alternate LPS acceptor residues, providing the overall size of the acceptor is conserved. This chain is Lipopolysaccharide 1,2-glucosyltransferase, found in Escherichia coli.